The primary structure comprises 34 residues: Tryptophanase operon leader peptide (34 aa).

This Proteus vulgaris protein is Tryptophanase operon leader peptide (tnaL).